The following is a 305-amino-acid chain: MTTTTSVLHTSALTSLPLLARGKVRDNYAVGNDRLLMVASDRLSAFDVILGEPIPGKGALLTQMALFWFDKLGSICPNHLTGEAPESVVTAAEIPQVAGRSMLVKRLKPIPVEAVVRGYLAGSGWVEYQQSQSVCGVPLPAGLKNASKLPEPIFTPAAKAEVGEHDENISYEQVVKVVGPELAAQIKTLSIAIYETAAAFALTKGIIIADTKFEFGLDENGTLTLMDEVLTPDSSRYWPVEGYEAAFAAGQNPPSYDKQFVRDWLEAVRINGKPWDKTPPSPHLPPDVISKTAAKYQEAMARLTA.

Belongs to the SAICAR synthetase family.

The enzyme catalyses 5-amino-1-(5-phospho-D-ribosyl)imidazole-4-carboxylate + L-aspartate + ATP = (2S)-2-[5-amino-1-(5-phospho-beta-D-ribosyl)imidazole-4-carboxamido]succinate + ADP + phosphate + 2 H(+). It participates in purine metabolism; IMP biosynthesis via de novo pathway; 5-amino-1-(5-phospho-D-ribosyl)imidazole-4-carboxamide from 5-amino-1-(5-phospho-D-ribosyl)imidazole-4-carboxylate: step 1/2. In Polaromonas naphthalenivorans (strain CJ2), this protein is Phosphoribosylaminoimidazole-succinocarboxamide synthase.